The sequence spans 184 residues: Peptide deformylase (184 aa).

Positions 111 and 154 each coordinate Fe cation. The active site involves glutamate 155. Histidine 158 serves as a coordination point for Fe cation.

This sequence belongs to the polypeptide deformylase family. It depends on Fe(2+) as a cofactor.

The catalysed reaction is N-terminal N-formyl-L-methionyl-[peptide] + H2O = N-terminal L-methionyl-[peptide] + formate. Removes the formyl group from the N-terminal Met of newly synthesized proteins. Requires at least a dipeptide for an efficient rate of reaction. N-terminal L-methionine is a prerequisite for activity but the enzyme has broad specificity at other positions. This is Peptide deformylase from Pediococcus pentosaceus (strain ATCC 25745 / CCUG 21536 / LMG 10740 / 183-1w).